The chain runs to 286 residues: Release factor glutamine methyltransferase (286 aa).

Residues 122-126 (GTGTG), aspartate 145, tryptophan 173, and asparagine 188 each bind S-adenosyl-L-methionine. 188-191 (NPPY) lines the substrate pocket.

This sequence belongs to the protein N5-glutamine methyltransferase family. PrmC subfamily.

The catalysed reaction is L-glutaminyl-[peptide chain release factor] + S-adenosyl-L-methionine = N(5)-methyl-L-glutaminyl-[peptide chain release factor] + S-adenosyl-L-homocysteine + H(+). Functionally, methylates the class 1 translation termination release factors RF1/PrfA and RF2/PrfB on the glutamine residue of the universally conserved GGQ motif. In Shewanella oneidensis (strain ATCC 700550 / JCM 31522 / CIP 106686 / LMG 19005 / NCIMB 14063 / MR-1), this protein is Release factor glutamine methyltransferase.